Reading from the N-terminus, the 536-residue chain is Glyco-Gag protein (536 aa).

Over 1 to 54 the chain is Cytoplasmic; sequence MSGASSGTATGARLFGISSVLGEYRVLIGDEGAGPSRSPSEVSFSVWYRSRAAR. The helical transmembrane segment at 55 to 75 threads the bilayer; the sequence is LVILCLVASFLVPCLTFLIAE. At 76–536 the chain is on the extracellular side; the sequence is TVMGQTVTTP…TQNRNKDREE (461 aa). Asparagine 137 carries an N-linked (GlcNAc...) asparagine; by host glycan. Disordered stretches follow at residues 174-284 and 494-536; these read VRPF…NNRP and ETPE…DREE. Over residues 177–198 the composition is skewed to pro residues; sequence FLPPPKPPTPLPQPLSPQPSAP. Over residues 199 to 209 the composition is skewed to low complexity; the sequence is PTSSLYPVLPK. Composition is skewed to pro residues over residues 210-223 and 233-246; these read TNPPKPPVLPPDPS and EPPPYPGGHGPPPS. The span at 494–511 shows a compositional bias: basic and acidic residues; that stretch reads ETPEEREERLWQRQEERD.

In terms of processing, glycosylated by host. Post-translationally, cleaved by host near the middle of the molecule, releasing the c-terminal half containing capsid and nucleoprotein domains op GAG.

Its subcellular location is the host cell membrane. Functionally, plays a role in viral particle release. Presumably acts by facilitating the fission of the virion bud at the cell surface. This chain is Glyco-Gag protein, found in Feline sarcoma virus (strain McDonough).